A 231-amino-acid polypeptide reads, in one-letter code: Small ribosomal subunit protein uS5 (231 aa).

The 64-residue stretch at 61–124 (KFRSKKPYRM…NRAKLNIIKV (64 aa)) folds into the S5 DRBM domain.

Belongs to the universal ribosomal protein uS5 family. Part of the 30S ribosomal subunit. Contacts protein S4.

With S4 and S12 plays an important role in translational accuracy. The protein is Small ribosomal subunit protein uS5 of Nanoarchaeum equitans (strain Kin4-M).